A 165-amino-acid chain; its full sequence is ATP synthase subunit b (165 aa).

The chain crosses the membrane as a helical span at residues 11–31; it reads LIFWTIVNFLLLVFLLGKFAW.

The protein belongs to the ATPase B chain family. As to quaternary structure, F-type ATPases have 2 components, F(1) - the catalytic core - and F(0) - the membrane proton channel. F(1) has five subunits: alpha(3), beta(3), gamma(1), delta(1), epsilon(1). F(0) has three main subunits: a(1), b(2) and c(10-14). The alpha and beta chains form an alternating ring which encloses part of the gamma chain. F(1) is attached to F(0) by a central stalk formed by the gamma and epsilon chains, while a peripheral stalk is formed by the delta and b chains.

It is found in the cell membrane. In terms of biological role, f(1)F(0) ATP synthase produces ATP from ADP in the presence of a proton or sodium gradient. F-type ATPases consist of two structural domains, F(1) containing the extramembraneous catalytic core and F(0) containing the membrane proton channel, linked together by a central stalk and a peripheral stalk. During catalysis, ATP synthesis in the catalytic domain of F(1) is coupled via a rotary mechanism of the central stalk subunits to proton translocation. Functionally, component of the F(0) channel, it forms part of the peripheral stalk, linking F(1) to F(0). The protein is ATP synthase subunit b of Elusimicrobium minutum (strain Pei191).